We begin with the raw amino-acid sequence, 494 residues long: Amidophosphoribosyltransferase (494 aa).

Positions 1-10 (MFNYSGLNEE) are excised as a propeptide. Cys-11 serves as the catalytic Nucleophile. In terms of domain architecture, Glutamine amidotransferase type-2 spans 11 to 231 (CGVFGIWNHP…AGEYVVINDK (221 aa)). Residues Ser-294, Asp-356, and Asp-357 each coordinate Mg(2+).

It in the C-terminal section; belongs to the purine/pyrimidine phosphoribosyltransferase family. Mg(2+) serves as cofactor.

It carries out the reaction 5-phospho-beta-D-ribosylamine + L-glutamate + diphosphate = 5-phospho-alpha-D-ribose 1-diphosphate + L-glutamine + H2O. Its pathway is purine metabolism; IMP biosynthesis via de novo pathway; N(1)-(5-phospho-D-ribosyl)glycinamide from 5-phospho-alpha-D-ribose 1-diphosphate: step 1/2. Catalyzes the formation of phosphoribosylamine from phosphoribosylpyrophosphate (PRPP) and glutamine. The chain is Amidophosphoribosyltransferase from Staphylococcus aureus (strain COL).